We begin with the raw amino-acid sequence, 628 residues long: Beta-lactamase-like protein 1 (628 aa).

An N-terminal signal peptide occupies residues M1–L28. Residues N45, N68, N198, and N241 are each glycosylated (N-linked (GlcNAc...) asparagine). The segment covering N245 to N281 has biased composition (low complexity). The interval N245–T285 is disordered. N-linked (GlcNAc...) asparagine glycosylation is found at N313 and N335. Residues E494 to Q516 form a disordered region. Acidic residues predominate over residues E496–Q506. Positions D507–Q516 are enriched in low complexity.

This sequence belongs to the beta-lactamase family.

It localises to the secreted. The polypeptide is Beta-lactamase-like protein 1 (Dictyostelium discoideum (Social amoeba)).